A 360-amino-acid polypeptide reads, in one-letter code: Protein phosphatase 1L (360 aa).

The Extracellular segment spans residues 1–25 (MIEDTMTLLSLLGRIMRYFLLRPET). Residues 26-42 (LFLLCISLALWSYFFHT) form a helical membrane-spanning segment. Residues 43-360 (DEVKTIVKSS…FRNSSKTEEQ (318 aa)) are Cytoplasmic-facing. One can recognise a PPM-type phosphatase domain in the interval 92–351 (NVAVYSIQGR…DNITVMVVKF (260 aa)). Mn(2+) is bound by residues Asp128, Gly129, Asp302, and Asp342.

It belongs to the PP2C family. In terms of assembly, interacts with MAP3K7/TAK1. Interacts with MAP3K5. The cofactor is Mg(2+). Mn(2+) is required as a cofactor. As to expression, ubiquitous. Highly expressed in heart, placenta, lung, liver, kidney and pancreas.

Its subcellular location is the membrane. It carries out the reaction O-phospho-L-seryl-[protein] + H2O = L-seryl-[protein] + phosphate. The enzyme catalyses O-phospho-L-threonyl-[protein] + H2O = L-threonyl-[protein] + phosphate. Functionally, acts as a suppressor of the SAPK signaling pathways by associating with and dephosphorylating MAP3K7/TAK1 and MAP3K5, and by attenuating the association between MAP3K7/TAK1 and MAP2K4 or MAP2K6. In Homo sapiens (Human), this protein is Protein phosphatase 1L (PPM1L).